The sequence spans 842 residues: ATP-binding cassette sub-family B member 6 (842 aa).

The Lumenal portion of the chain corresponds to 1-26 (MVTVGNYCEAEGPVGPAWMQDGLSPC). The segment at 1 to 205 (MVTVGNYCEA…SGGLFVLGLW (205 aa)) is required for the lysosomal targeting. Residues 1–236 (MVTVGNYCEA…RSQVRSAAQQ (236 aa)) form a required for ATPase activity region. An N-linked (GlcNAc...) asparagine glycan is attached at asparagine 6. Cysteine 8 and cysteine 26 are joined by a disulfide. The helical transmembrane segment at 27-47 (FFFTLVPSTRMALGTLALVLA) threads the bilayer. The Cytoplasmic portion of the chain corresponds to 48-72 (LPCRRRERPAGADSLSWGAGPRISP). Residues 73 to 93 (YVLQLLLATLQAALPLAGLAG) traverse the membrane as a helical segment. At 94-106 (RVGTARGAPLPSY) the chain is on the lumenal side. The helical transmembrane segment at 107–127 (LLLASVLESLAGACGLWLLVV) threads the bilayer. At 128–147 (ERSQARQRLAMGIWIKFRHS) the chain is on the cytoplasmic side. The chain crosses the membrane as a helical span at residues 148-168 (PGLLLLWTVAFAAENLALVSW). The Lumenal segment spans residues 169-185 (NSPQWWWARADLGQQVQ). The chain crosses the membrane as a helical span at residues 186 to 206 (FSLWVLRYVVSGGLFVLGLWA). At 207 to 263 (PGLRPQSYTLQVHEEDQDVERSQVRSAAQQSTWRDFGRKLRLLSGYLWPRGSPALQL) the chain is on the cytoplasmic side. Residues 264–284 (VVLICLGLMGLERALNVLVPI) traverse the membrane as a helical segment. One can recognise an ABC transmembrane type-1 domain in the interval 265-556 (VLICLGLMGL…FGTYYRMIQT (292 aa)). At 285 to 291 (FYRNIVN) the chain is on the lumenal side. Residues 292–312 (LLTEKAPWNSLAWTVTSYVFL) traverse the membrane as a helical segment. The Cytoplasmic portion of the chain corresponds to 313 to 375 (KFLQGGGTGS…TGEVLRIADR (63 aa)). Residues 376–396 (GTSSVTGLLSYLVFNVIPTLA) form a helical membrane-spanning segment. Residue aspartate 397 is a topological domain, lumenal. Residues 398-418 (IIIGIIYFSMFFNAWFGLIVF) traverse the membrane as a helical segment. Residues 419 to 499 (LCMSLYLTLT…SSASLVLLNQ (81 aa)) are Cytoplasmic-facing. A helical membrane pass occupies residues 500–520 (TQNLVIGLGLLAGSLLCAYFV). The Lumenal portion of the chain corresponds to 521–529 (TEQKLQVGD). Residues 530 to 550 (YVLFGTYIIQLYMPLNWFGTY) traverse the membrane as a helical segment. The Cytoplasmic portion of the chain corresponds to 551–842 (YRMIQTNFID…EDTKPQTMER (292 aa)). In terms of domain architecture, ABC transporter spans 590 to 824 (IEFENVHFSY…GGVYADMWQL (235 aa)). ATP-binding positions include tyrosine 599 and 623–634 (GPSGAGKSTILR).

This sequence belongs to the ABC transporter superfamily. ABCB family. Heavy Metal importer (TC 3.A.1.210) subfamily. As to quaternary structure, homodimer. N-glycosylated. Widely expressed. High expression is detected in the retinal epithelium. Expressed in mature erythrocytes.

It is found in the cell membrane. It localises to the mitochondrion outer membrane. Its subcellular location is the endoplasmic reticulum membrane. The protein resides in the golgi apparatus membrane. The protein localises to the endosome membrane. It is found in the lysosome membrane. It localises to the late endosome membrane. Its subcellular location is the early endosome membrane. The protein resides in the secreted. The protein localises to the extracellular exosome. It is found in the mitochondrion. It localises to the endosome. Its subcellular location is the multivesicular body membrane. The protein resides in the melanosome membrane. It carries out the reaction heme b(in) + ATP + H2O = heme b(out) + ADP + phosphate + H(+). The enzyme catalyses coproporphyrin III(in) + ATP + H2O = coproporphyrin III(out) + ADP + phosphate + H(+). It catalyses the reaction pheophorbide a(in) + ATP + H2O = pheophorbide a(out) + ADP + phosphate + H(+). The catalysed reaction is coproporphyrinogen III(in) + ATP + H2O = coproporphyrinogen III(out) + ADP + phosphate + H(+). It carries out the reaction protoporphyrin IX(in) + ATP + H2O = protoporphyrin IX(out) + ADP + phosphate + H(+). The enzyme catalyses coproporphyrin I(in) + ATP + H2O = coproporphyrin I(out) + ADP + phosphate + H(+). It catalyses the reaction uroporphyrin I(in) + ATP + H2O = uroporphyrin I(out) + ADP + phosphate + H(+). The catalysed reaction is uroporphyrin III(in) + ATP + H2O = uroporphyrin III(out) + ADP + phosphate + H(+). ATPase activity is inhibited by MgATP with an IC(50) of 1.03 mM and up-regulated by coporphyrin III&gt; hemin &gt; protoporphyrin IX. ATPase activity for hemin is up-regulated by glutathione. The ATPase activity is impaired by increasing copper concentrations (0-300 uM). The ATPase activity is stimulated in presence of glutathione for increasing copper concentrations (0-300 uM). ATP-dependent transporter that catalyzes the transport of a broad-spectrum of porphyrins from the cytoplasm to the extracellular space through the plasma membrane or into the vesicle lumen. May also function as an ATP-dependent importer of porphyrins from the cytoplasm into the mitochondria, in turn may participate in the de novo heme biosynthesis regulation and in the coordination of heme and iron homeostasis during phenylhydrazine stress. May also play a key role in the early steps of melanogenesis producing PMEL amyloid fibrils. In vitro, it confers to cells a resistance to toxic metal such as arsenic and cadmium and against chemotherapeutics agent such as 5-fluorouracil, SN-38 and vincristin. In addition may play a role in the transition metal homeostasis. The protein is ATP-binding cassette sub-family B member 6 of Homo sapiens (Human).